Consider the following 596-residue polypeptide: Uptake hydrogenase large subunit (596 aa).

Ni(2+) contacts are provided by Cys-75, Cys-78, Cys-575, and Cys-578.

This sequence belongs to the [NiFe]/[NiFeSe] hydrogenase large subunit family. As to quaternary structure, heterodimer of a large and a small subunit. Ni(2+) is required as a cofactor.

It localises to the cell membrane. The catalysed reaction is H2 + A = AH2. This enzyme recycles the H(2) produced by nitrogenase to increase the production of ATP and to protect nitrogenase against inhibition or damage by O(2) under carbon- or phosphate-limited conditions. In Bradyrhizobium diazoefficiens (strain JCM 10833 / BCRC 13528 / IAM 13628 / NBRC 14792 / USDA 110), this protein is Uptake hydrogenase large subunit (hupB).